A 727-amino-acid chain; its full sequence is Malate synthase G (727 aa).

Acetyl-CoA contacts are provided by residues valine 117, 124 to 125 (RY), serine 275, and arginine 312. Arginine 339 serves as the catalytic Proton acceptor. Glyoxylate-binding positions include arginine 339, glutamate 431, and 456–459 (GFLD). Mg(2+)-binding residues include glutamate 431 and aspartate 459. Acetyl-CoA is bound at residue proline 540. Cysteine 616 is modified (cysteine sulfenic acid (-SOH)). Aspartate 630 (proton donor) is an active-site residue.

This sequence belongs to the malate synthase family. GlcB subfamily. In terms of assembly, monomer. Requires Mg(2+) as cofactor.

The protein resides in the cytoplasm. The enzyme catalyses glyoxylate + acetyl-CoA + H2O = (S)-malate + CoA + H(+). It participates in carbohydrate metabolism; glyoxylate cycle; (S)-malate from isocitrate: step 2/2. Functionally, involved in the glycolate utilization. Catalyzes the condensation and subsequent hydrolysis of acetyl-coenzyme A (acetyl-CoA) and glyoxylate to form malate and CoA. The protein is Malate synthase G of Halalkalibacterium halodurans (strain ATCC BAA-125 / DSM 18197 / FERM 7344 / JCM 9153 / C-125) (Bacillus halodurans).